Reading from the N-terminus, the 208-residue chain is Thymidylate kinase (208 aa).

Position 10–17 (10–17) interacts with ATP; it reads GIDGCGKT.

The protein belongs to the thymidylate kinase family.

The catalysed reaction is dTMP + ATP = dTDP + ADP. In terms of biological role, phosphorylation of dTMP to form dTDP in both de novo and salvage pathways of dTTP synthesis. In Caldanaerobacter subterraneus subsp. tengcongensis (strain DSM 15242 / JCM 11007 / NBRC 100824 / MB4) (Thermoanaerobacter tengcongensis), this protein is Thymidylate kinase.